Consider the following 450-residue polypeptide: Bifunctional protein GlmU (450 aa).

Residues 1–229 (MRRHAIILAA…VEEIMGVNDR (229 aa)) form a pyrophosphorylase region. Residues 8 to 11 (LAAG), lysine 22, glutamine 72, and 77 to 78 (GT) each bind UDP-N-acetyl-alpha-D-glucosamine. A Mg(2+)-binding site is contributed by aspartate 102. The UDP-N-acetyl-alpha-D-glucosamine site is built by glycine 139, glutamate 154, and asparagine 227. Asparagine 227 is a Mg(2+) binding site. Residues 230-250 (VMLSQAEKAMQRRTNHYHMLN) are linker. Residues 251–450 (GVTIIDPDST…RQTTKEGYRK (200 aa)) form an N-acetyltransferase region. Residues arginine 332 and lysine 350 each contribute to the UDP-N-acetyl-alpha-D-glucosamine site. The active-site Proton acceptor is the histidine 362. Residues tyrosine 365 and asparagine 376 each contribute to the UDP-N-acetyl-alpha-D-glucosamine site. Acetyl-CoA is bound by residues 385 to 386 (NY), alanine 422, and arginine 439.

This sequence in the N-terminal section; belongs to the N-acetylglucosamine-1-phosphate uridyltransferase family. It in the C-terminal section; belongs to the transferase hexapeptide repeat family. In terms of assembly, homotrimer. The cofactor is Mg(2+).

The protein localises to the cytoplasm. The catalysed reaction is alpha-D-glucosamine 1-phosphate + acetyl-CoA = N-acetyl-alpha-D-glucosamine 1-phosphate + CoA + H(+). It catalyses the reaction N-acetyl-alpha-D-glucosamine 1-phosphate + UTP + H(+) = UDP-N-acetyl-alpha-D-glucosamine + diphosphate. It participates in nucleotide-sugar biosynthesis; UDP-N-acetyl-alpha-D-glucosamine biosynthesis; N-acetyl-alpha-D-glucosamine 1-phosphate from alpha-D-glucosamine 6-phosphate (route II): step 2/2. Its pathway is nucleotide-sugar biosynthesis; UDP-N-acetyl-alpha-D-glucosamine biosynthesis; UDP-N-acetyl-alpha-D-glucosamine from N-acetyl-alpha-D-glucosamine 1-phosphate: step 1/1. The protein operates within bacterial outer membrane biogenesis; LPS lipid A biosynthesis. Functionally, catalyzes the last two sequential reactions in the de novo biosynthetic pathway for UDP-N-acetylglucosamine (UDP-GlcNAc). The C-terminal domain catalyzes the transfer of acetyl group from acetyl coenzyme A to glucosamine-1-phosphate (GlcN-1-P) to produce N-acetylglucosamine-1-phosphate (GlcNAc-1-P), which is converted into UDP-GlcNAc by the transfer of uridine 5-monophosphate (from uridine 5-triphosphate), a reaction catalyzed by the N-terminal domain. The sequence is that of Bifunctional protein GlmU from Staphylococcus aureus (strain Mu50 / ATCC 700699).